Here is a 345-residue protein sequence, read N- to C-terminus: KH domain-containing, RNA-binding, signal transduction-associated protein 2 (345 aa).

The KH domain maps to 65 to 131 (LIPVKQYPKF…AKHAHLSDEL (67 aa)). Disordered stretches follow at residues 178 to 224 (LNGS…TRGA) and 321 to 345 (SRST…YGRY). Residues 336–345 (GYREHPYGRY) show a composition bias toward basic and acidic residues.

It belongs to the KHDRBS family.

The protein localises to the nucleus. Its function is as follows. RNA-binding protein that plays a role in the regulation of alternative splicing. In Xenopus tropicalis (Western clawed frog), this protein is KH domain-containing, RNA-binding, signal transduction-associated protein 2 (khdrbs2).